The sequence spans 940 residues: Leucine--tRNA ligase, mitochondrial (940 aa).

The short motif at 54 to 64 (PYPSGALHMGH) is the 'HIGH' region element. The 'KMSKS' region motif lies at 638–642 (TINKL). Lys-641 contributes to the ATP binding site. A disordered region spans residues 724 to 744 (KEQHQHQQQQHQQPLPSSEFN).

Belongs to the class-I aminoacyl-tRNA synthetase family.

The protein resides in the mitochondrion. The catalysed reaction is tRNA(Leu) + L-leucine + ATP = L-leucyl-tRNA(Leu) + AMP + diphosphate. The sequence is that of Leucine--tRNA ligase, mitochondrial (mleuS) from Dictyostelium discoideum (Social amoeba).